Reading from the N-terminus, the 394-residue chain is MTNIIRQFLRQEAAGGLILIIAAAIALLMANSALQGIYQSFLDIPVSIKIASLDISKPLLLWINDGLMAVFFLVVGLEVKRELMEGSLAGRDKAVFPAIAALGGMLAPALIYLLFNGADEVTRQGWAIPAATDIAFALGVMALLGNRVPTGLKVFLLALAIIDDLGVIIIIALFYTQQVSLQSLGIAAAAIALLAYMNWRGVGKTSAYLLVGLVLWVCILKSGVHATLAGVIVGFMIPLHTQDQRSPSESLEHGLHPWVAYLILPLFAFANAGVSLQGVSLSGLTSLLPMGIATGLFIGKPLGIFTFSWLAVKLGIAKLPDAINFKQIFAVSVLCGIGFTMSIFIASLAFEGTDIALTTYSKLGILLGSTTAAVVGYSLLRLVLPARRKAVNVR.

Helical transmembrane passes span Ala14–Leu34, Leu59–Val79, Val95–Phe115, Gly125–Gly145, Val154–Phe174, Val179–Trp199, Leu213–Val233, Gly254–Val274, Ile292–Val312, Ile328–Leu348, and Leu363–Val383.

The protein belongs to the NhaA Na(+)/H(+) (TC 2.A.33) antiporter family.

Its subcellular location is the cell inner membrane. It carries out the reaction Na(+)(in) + 2 H(+)(out) = Na(+)(out) + 2 H(+)(in). In terms of biological role, na(+)/H(+) antiporter that extrudes sodium in exchange for external protons. This chain is Na(+)/H(+) antiporter NhaA, found in Yersinia pseudotuberculosis serotype O:1b (strain IP 31758).